A 364-amino-acid chain; its full sequence is Carbamoyl phosphate synthase small chain (364 aa).

CPSase stretches follow at residues 1–167 and 1–171; these read MKRQ…PSPG and MKRQ…RGER. S45, G219, and G221 together coordinate L-glutamine. The Glutamine amidotransferase type-1 domain maps to 171–358; the sequence is RIVLIDFGMK…LALIREFNKK (188 aa). C246 functions as the Nucleophile in the catalytic mechanism. L247, Q250, N288, G290, and Y291 together coordinate L-glutamine. Active-site residues include H331 and E333.

Belongs to the CarA family. In terms of assembly, composed of two chains; the small (or glutamine) chain promotes the hydrolysis of glutamine to ammonia, which is used by the large (or ammonia) chain to synthesize carbamoyl phosphate. Tetramer of heterodimers (alpha,beta)4.

It carries out the reaction hydrogencarbonate + L-glutamine + 2 ATP + H2O = carbamoyl phosphate + L-glutamate + 2 ADP + phosphate + 2 H(+). The catalysed reaction is L-glutamine + H2O = L-glutamate + NH4(+). It participates in amino-acid biosynthesis; L-arginine biosynthesis; carbamoyl phosphate from bicarbonate: step 1/1. It functions in the pathway pyrimidine metabolism; UMP biosynthesis via de novo pathway; (S)-dihydroorotate from bicarbonate: step 1/3. Small subunit of the glutamine-dependent carbamoyl phosphate synthetase (CPSase). CPSase catalyzes the formation of carbamoyl phosphate from the ammonia moiety of glutamine, carbonate, and phosphate donated by ATP, constituting the first step of 2 biosynthetic pathways, one leading to arginine and/or urea and the other to pyrimidine nucleotides. The small subunit (glutamine amidotransferase) binds and cleaves glutamine to supply the large subunit with the substrate ammonia. The chain is Carbamoyl phosphate synthase small chain from Bacillus caldolyticus.